Consider the following 488-residue polypeptide: Bifunctional pantoate ligase/cytidylate kinase (488 aa).

ATP is bound at residue 1-8 (MGALHRAH). The pantoate--beta-alanine ligase stretch occupies residues 1 to 251 (MGALHRAHGQ…CGETRLIDHT (251 aa)). His-8 acts as the Proton donor in catalysis. Gln-36 contributes to the (R)-pantoate binding site. Beta-alanine is bound at residue Gln-36. 125-128 (GEKD) contacts ATP. Gln-131 contacts (R)-pantoate. Residues Val-154 and 162-165 (CSSR) each bind ATP. Positions 252-488 (FLMSRQPIVA…PEEVWPTPGS (237 aa)) are cytidylate kinase.

In the N-terminal section; belongs to the pantothenate synthetase family. The protein in the C-terminal section; belongs to the cytidylate kinase family. Type 1 subfamily.

It is found in the cytoplasm. The enzyme catalyses (R)-pantoate + beta-alanine + ATP = (R)-pantothenate + AMP + diphosphate + H(+). It carries out the reaction CMP + ATP = CDP + ADP. It catalyses the reaction dCMP + ATP = dCDP + ADP. The protein operates within cofactor biosynthesis; (R)-pantothenate biosynthesis; (R)-pantothenate from (R)-pantoate and beta-alanine: step 1/1. Functionally, catalyzes the condensation of pantoate with beta-alanine in an ATP-dependent reaction via a pantoyl-adenylate intermediate. Catalyzes the transfer of a phosphate group from ATP to either CMP or dCMP to form CDP or dCDP and ADP, respectively. The chain is Bifunctional pantoate ligase/cytidylate kinase from Prochlorococcus marinus (strain MIT 9303).